Consider the following 483-residue polypeptide: Dual specificity protein phosphatase CDC14C (483 aa).

A disordered region spans residues 1–45 (MKRKSEGRSSWAAATCSPCCSLTSPSVKKIRSPTQQDPRHRDPQD). The Nucleolar localization signal signature appears at 1–53 (MKRKSEGRSSWAAATCSPCCSLTSPSVKKIRSPTQQDPRHRDPQDDVYLDITD). The segment covering 12–26 (AAATCSPCCSLTSPS) has biased composition (low complexity). The segment at 43-197 (PQDDVYLDIT…AMQYGFLNFN (155 aa)) is a. The linker stretch occupies residues 198-211 (SFNLDEYEHYEKAE). Positions 212 to 378 (NGDLNWIIPD…EGDYFCQKLK (167 aa)) are b. The Tyrosine-protein phosphatase domain maps to 213–373 (GDLNWIIPDR…TSLWLEGDYF (161 aa)). The active-site Phosphocysteine intermediate is the cysteine 313. Positions 407 to 426 (QDQQEPEPYSDDDEINGGTQ) are disordered. Acidic residues predominate over residues 408–421 (DQQEPEPYSDDDEI). The helical transmembrane segment at 444–466 (ILLTCPLAVLTSALCSVVIWWIV) threads the bilayer.

Belongs to the protein-tyrosine phosphatase family. Non-receptor class CDC14 subfamily.

Its subcellular location is the membrane. It localises to the nucleus. It is found in the nucleolus. The protein resides in the cytoplasm. The protein localises to the cytoskeleton. It catalyses the reaction O-phospho-L-tyrosyl-[protein] + H2O = L-tyrosyl-[protein] + phosphate. The enzyme catalyses O-phospho-L-seryl-[protein] + H2O = L-seryl-[protein] + phosphate. It carries out the reaction O-phospho-L-threonyl-[protein] + H2O = L-threonyl-[protein] + phosphate. Its function is as follows. Dual-specificity phosphatase. Preferentially dephosphorylates proteins modified by proline-directed kinases. The chain is Dual specificity protein phosphatase CDC14C from Symphalangus syndactylus (Siamang).